A 998-amino-acid chain; its full sequence is SYGYDEKGGVSVPGPMGPSGPRGLPGPPGPGPQGFQGPPGEPGEPGSGPMGPRGPPGPPGKNGDDGEAGKPGRPGERGPPGPQGARGLPGTAGLPGMKGHRGFSGLDGAKGDAGPAGPKGEPGSPGENGAPGQMGPRGLPGERGRPGASGPAGARGNDGATGAAGPPGPTGPAGPPGFPGAVGAKGEAGPQGARGSEGPQGVRGEPGPPGPAGAAGPAGNPGADGQPGAKGANGAPGIAGAPGFPGARGPSGPQGPSGPPGPKGNSGEPGAPGSKGDTGAKGEPGPTGIQGPPGPAGEEGKRGARGEPGPTGLPGPPGERGGPGSRGFPGADGVAGPKGPAGERGSPGPAGPKGSPGEAGRPGEAGLPGAKGLTGSPGSPGPDGKTGPPGPAGQDGRPGPPGPPGARGQAGVMGFPGPKGAAGEPGKAGERGVPGPPGAVGPAGKDGEAGAQGPPGPAGPAGERGEQGPAGPGFQGLPGPAGPPGEAGKPGEQGVPGDLGAPGPSGARGERGFPGERGVQGPPGPAGPRGNGSQGAPGLQGMPGERGAAGLPGPKGDRGDAGPKGADGAPGKDGVRGLTGPIGPPGPAGAPGDKGESGPSGPAGPTGARGAPGDRGEPGPPGPAGFAGPPGADGQPGAKGEPGDAGAKGDAGPPGPAGPTGPPGPIGNVGAPGPKGARGSAGPPGATGFPGAAGRVGPPGPSGNAGPPGPPGPVGKEGGKGPRGETGPAGRPGEVGPPGPPGPGEKGSPGADGPAGAPGTPGPQGISGQRGVVGLPGQRGERGFPGLPGPSGEPGKQGPSGSSGERGPPGPMGPPGLAGPPGESGREGAPGAEGSPGRDGSPGPKGDRGETGPGPPGAPGAPGAPGPVGPAGKNGDRGETGPAGPAGPAGPAGARGPAGPQGPRGDKGETGEQGDRGIKGHRGFSGLQGPAGPPGSPGEQGPSGASGPAGPRGPPGSAGSPGKDGLNGLPGPIGPPGPRGRTGDAGPVGPPGPPGPPG.

Residues 1–998 are disordered; it reads SYGYDEKGGV…GPPGPPGPPG (998 aa). A compositionally biased stretch (low complexity) spans 9 to 22; that stretch reads GVSVPGPMGPSGPR. 4-hydroxyproline is present on residues Pro-25, Pro-28, Pro-30, Pro-39, Pro-42, Pro-45, Pro-59, Pro-74, Pro-80, Pro-89, and Pro-95. Residues 62–76 are compositionally biased toward basic and acidic residues; the sequence is NGDDGEAGKPGRPGE. 5-hydroxylysine; alternate is present on Lys-98. An O-linked (Gal...) hydroxylysine; alternate glycan is attached at Lys-98. Residue Ser-104 is modified to Phosphoserine. Residues 112–128 are compositionally biased toward low complexity; the sequence is DAGPAGPKGEPGSPGEN. 4-hydroxyproline is present on residues Pro-122, Pro-125, Pro-131, Pro-140, Pro-146, Pro-167, Pro-176, Pro-179, Pro-206, Pro-209, Pro-221, Pro-227, Pro-236, Pro-242, Pro-245, and Pro-260. The segment covering 146–164 has biased composition (low complexity); the sequence is PGASGPAGARGNDGATGAA. The span at 166 to 178 shows a compositional bias: pro residues; that stretch reads PPGPTGPAGPPGF. The span at 212-251 shows a compositional bias: low complexity; the sequence is AGAAGPAGNPGADGQPGAKGANGAPGIAGAPGFPGARGPS. Lys-263 is subject to 5-hydroxylysine. 4-hydroxyproline is present on residues Pro-269, Pro-272, Pro-284, Pro-293, Pro-308, Pro-314, Pro-323, and Pro-329. Residues 318-327 show a composition bias toward gly residues; sequence GERGGPGSRG. Position 338 is a 5-hydroxylysine (Lys-338). 4-hydroxyproline is present on residues Pro-347, Pro-356, Pro-362, Pro-368, Pro-377, Pro-380, Pro-389, Pro-398, Pro-404, Pro-416, Pro-425, Pro-434, Pro-437, Pro-455, Pro-472, Pro-478, Pro-484, Pro-490, Pro-496, Pro-502, Pro-514, Pro-523, Pro-537, Pro-543, and Pro-552. Residues 371-397 show a composition bias toward low complexity; sequence KGLTGSPGSPGPDGKTGPPGPAGQDGR. Over residues 406–425 the composition is skewed to low complexity; the sequence is ARGQAGVMGFPGPKGAAGEP. The span at 484 to 493 shows a compositional bias: low complexity; it reads PGEAGKPGEQ. The residue at position 564 (Lys-564) is a 5-hydroxylysine. Residues Pro-570, Pro-585, and Pro-591 each carry the 4-hydroxyproline modification. Residues 597–611 are compositionally biased toward low complexity; sequence SGPSGPAGPTGARGA. At Ser-600 the chain carries Phosphoserine. 4-hydroxyproline is present on residues Pro-612, Pro-618, Pro-621, Pro-630, Pro-636, Pro-654, Pro-663, and Pro-672. Low complexity predominate over residues 624 to 651; it reads AGFAGPPGADGQPGAKGEPGDAGAKGDA. The span at 653-665 shows a compositional bias: pro residues; sequence PPGPAGPTGPPGP. At Lys-675 the chain carries 5-hydroxylysine. Positions 680-696 are enriched in low complexity; sequence SAGPPGATGFPGAAGRV. Residues Pro-684 and Pro-690 each carry the 4-hydroxyproline modification. A 3-hydroxyproline modification is found at Pro-698. 4-hydroxyproline is present on residues Pro-699, Pro-708, Pro-711, Pro-732, Pro-741, Pro-749, Pro-758, Pro-776, Pro-785, Pro-788, Pro-794, Pro-809, Pro-815, Pro-821, Pro-830, and Pro-836. The segment covering 725–734 has biased composition (low complexity); the sequence is ETGPAGRPGE. Over residues 746-758 the composition is skewed to low complexity; the sequence is KGSPGADGPAGAP. Positions 808–818 are enriched in pro residues; sequence PPGPMGPPGLA. The residue at position 845 (Lys-845) is a 5-hydroxylysine. Over residues 853 to 868 the composition is skewed to pro residues; it reads PGPPGAPGAPGAPGPV. 4-hydroxyproline is present on residues Pro-856, Pro-859, and Pro-862. Residues 889-903 are compositionally biased toward low complexity; that stretch reads AGPAGARGPAGPQGP. The segment covering 904–918 has biased composition (basic and acidic residues); that stretch reads RGDKGETGEQGDRGI. A 5-hydroxylysine modification is found at Lys-907. The residue at position 919 (Lys-919) is a 5-hydroxylysine; alternate. Lys-919 is a glycosylation site (O-linked (Gal...) hydroxylysine; alternate). A 4-hydroxyproline mark is found at Pro-934, Pro-937, Pro-955, and Pro-970. Positions 937–970 are enriched in low complexity; that stretch reads PGEQGPSGASGPAGPRGPPGSAGSPGKDGLNGLP. At Pro-975 the chain carries 3-hydroxyproline. Position 976 is a 4-hydroxyproline (Pro-976). Pro residues predominate over residues 988–998; that stretch reads VGPPGPPGPPG. Pro-990 is modified (3-hydroxyproline). Pro-991 carries the 4-hydroxyproline modification. A 3-hydroxyproline modification is found at Pro-993. 4-hydroxyproline is present on Pro-994. Pro-996 is modified (3-hydroxyproline). At Pro-997 the chain carries 4-hydroxyproline.

This sequence belongs to the fibrillar collagen family. As to quaternary structure, trimers of one alpha 2(I) and two alpha 1(I) chains. Post-translationally, contains mostly 4-hydroxyproline. Proline residues at the third position of the tripeptide repeating unit (G-X-Y) are hydroxylated in some or all of the chains. In terms of processing, contains 3-hydroxyproline at a few sites. This modification occurs on the first proline residue in the sequence motif Gly-Pro-Hyp, where Hyp is 4-hydroxyproline. Lysine residues at the third position of the tripeptide repeating unit (G-X-Y) are 5-hydroxylated in some or all of the chains. Post-translationally, O-glycosylated on hydroxylated lysine residues. The O-linked glycan consists of a Glc-Gal disaccharide. As to expression, expressed in bones.

Its subcellular location is the secreted. The protein resides in the extracellular space. It localises to the extracellular matrix. Its function is as follows. Type I collagen is a member of group I collagen (fibrillar forming collagen). This chain is Collagen alpha-1(I) chain, found in Nothrotheriops shastensis (Shasta ground sloth).